The sequence spans 311 residues: Methionyl-tRNA formyltransferase (311 aa).

112 to 115 provides a ligand contact to (6S)-5,6,7,8-tetrahydrofolate; the sequence is SLLP.

Belongs to the Fmt family.

The catalysed reaction is L-methionyl-tRNA(fMet) + (6R)-10-formyltetrahydrofolate = N-formyl-L-methionyl-tRNA(fMet) + (6S)-5,6,7,8-tetrahydrofolate + H(+). In terms of biological role, attaches a formyl group to the free amino group of methionyl-tRNA(fMet). The formyl group appears to play a dual role in the initiator identity of N-formylmethionyl-tRNA by promoting its recognition by IF2 and preventing the misappropriation of this tRNA by the elongation apparatus. The protein is Methionyl-tRNA formyltransferase of Bartonella henselae (strain ATCC 49882 / DSM 28221 / CCUG 30454 / Houston 1) (Rochalimaea henselae).